Consider the following 762-residue polypeptide: 5-methyltetrahydropteroyltriglutamate--homocysteine methyltransferase (762 aa).

Residues 17–20 (REWK) and Lys111 contribute to the 5-methyltetrahydropteroyltri-L-glutamate site. Residues 435 to 437 (IGS) and Glu488 each bind L-homocysteine. L-methionine-binding positions include 435–437 (IGS) and Glu488. 5-methyltetrahydropteroyltri-L-glutamate is bound by residues 519–520 (RC) and Trp565. Asp603 is an L-homocysteine binding site. Asp603 contacts L-methionine. Glu609 serves as a coordination point for 5-methyltetrahydropteroyltri-L-glutamate. The Zn(2+) site is built by His645, Cys647, and Glu669. Residue His698 is the Proton donor of the active site. Zn(2+) is bound at residue Cys730.

It belongs to the vitamin-B12 independent methionine synthase family. Zn(2+) serves as cofactor.

The enzyme catalyses 5-methyltetrahydropteroyltri-L-glutamate + L-homocysteine = tetrahydropteroyltri-L-glutamate + L-methionine. The protein operates within amino-acid biosynthesis; L-methionine biosynthesis via de novo pathway; L-methionine from L-homocysteine (MetE route): step 1/1. Functionally, catalyzes the transfer of a methyl group from 5-methyltetrahydrofolate to homocysteine resulting in methionine formation. In Bacillus mycoides (strain KBAB4) (Bacillus weihenstephanensis), this protein is 5-methyltetrahydropteroyltriglutamate--homocysteine methyltransferase.